Here is a 251-residue protein sequence, read N- to C-terminus: MIRKLAALIVAAAALQACAVSDRLSYVGQTPPMTPIQNPADLAGTGPSQLPMPMPRMPQQRYATNSTANNSLWTANSPTFFGDPRADQVGDIVTVNIAISDSAQLNNTTNRSRSSAEDSDLTSFLGADLTGFFNDNIDPTSMTSLGSTSSLAGSGSVNRTESISLTVAALVTQVLPNGNLVIAGRQEVRVNNEVRELLITGIARPQDIGSDNTIAHTQIAEARISYGGRGHLSDAQRPRYGQELYDILMPF.

A signal peptide spans 1–17; it reads MIRKLAALIVAAAALQA. Cysteine 18 carries the N-palmitoyl cysteine lipid modification. A lipid anchor (S-diacylglycerol cysteine) is attached at cysteine 18.

Belongs to the FlgH family. The basal body constitutes a major portion of the flagellar organelle and consists of four rings (L,P,S, and M) mounted on a central rod.

It is found in the cell outer membrane. The protein resides in the bacterial flagellum basal body. Its function is as follows. Assembles around the rod to form the L-ring and probably protects the motor/basal body from shearing forces during rotation. The chain is Flagellar L-ring protein from Maricaulis maris (strain MCS10) (Caulobacter maris).